Consider the following 173-residue polypeptide: Calcium-binding protein 5 (173 aa).

EF-hand domains follow at residues 28–63, 82–99, 105–140, and 142–173; these read DEIE…MGYM, GRVD…KLLA, IGVQ…LLGD, and LTSQ…MMSR. Residues aspartate 41, aspartate 43, aspartate 45, and aspartate 52 each coordinate Ca(2+). Ca(2+)-binding residues include aspartate 118, asparagine 120, aspartate 122, glutamate 124, glutamate 129, aspartate 155, asparagine 157, aspartate 159, threonine 161, and glutamate 166.

In terms of assembly, interacts with CACNA1C (via C-terminal CDB motif) in a calcium-dependent manner. Interacts with STXBP1. Interacts with MYO6. As to expression, expressed in the retina (at protein level).

It is found in the cytoplasm. In terms of biological role, inhibits calcium-dependent inactivation of L-type calcium channel and shifts voltage dependence of activation to more depolarized membrane potentials. Involved in the transmission of light signals. May positively regulate neurotransmitter vesicle endocytosis and exocytosis in a salt-dependent manner. May play a role in the extension and network organization of neurites. The chain is Calcium-binding protein 5 (CABP5) from Bos taurus (Bovine).